A 150-amino-acid polypeptide reads, in one-letter code: MNTGLPSQIQVIELLGGEVARAGYEVEDVIIHTWSQPFWITVLADGDTVLARDIIATLSHSVSALLDGLDNIVDRYFLEVSSLGMGRPFTSEKHFRRARGRKVELAAVGRIPADRSNWGDVRRHGDVGDPRRPRLCGMRDPAIEIMKAIV.

This sequence belongs to the RimP family.

It localises to the cytoplasm. Functionally, required for maturation of 30S ribosomal subunits. This Mycobacterium leprae (strain TN) protein is Putative ribosome maturation factor RimP.